Reading from the N-terminus, the 337-residue chain is Phosphate acyltransferase (337 aa).

It belongs to the PlsX family. Homodimer. Probably interacts with PlsY.

Its subcellular location is the cytoplasm. The enzyme catalyses a fatty acyl-[ACP] + phosphate = an acyl phosphate + holo-[ACP]. It functions in the pathway lipid metabolism; phospholipid metabolism. Its function is as follows. Catalyzes the reversible formation of acyl-phosphate (acyl-PO(4)) from acyl-[acyl-carrier-protein] (acyl-ACP). This enzyme utilizes acyl-ACP as fatty acyl donor, but not acyl-CoA. The protein is Phosphate acyltransferase of Listeria monocytogenes serotype 4b (strain F2365).